Reading from the N-terminus, the 336-residue chain is MRPILLAGHERSLNQIKFNRDGDLLFSVAKDKIVCAWWSANGERLGTYSGHLGAIWTVDVSPNTVLLATGSADNSVRLWNVKTGECVKVWEFPTAVKRVEFSPDGSKVLAVTEKRMGFLGTIAVLDINYDGDFTNQAEEPSLRITCTESKATVAGWSYLGKYIIAGHEDGSVSQYDAKTGEQLENVQAHEFDHQINDLQFSPDRTHFLTASKDKSAKLMSSRNLAILKTYVADTPLNSAAITPKKEYVILGGGQAAMDVTTTSARQGKFEARFYHKVFEDEIGRVKGHFGPLNTIHVHPAGTAYASGGEDGYVRVHHFDKPYFDFMYEVEREQLRR.

WD repeat units follow at residues 8–47 (GHER…RLGT), 50–91 (GHLG…KVWE), 146–185 (CTES…QLEN), 190–229 (EFDH…ILKT), and 287–326 (GHFG…FDFM).

Belongs to the eIF-3 subunit I family. Component of the eukaryotic translation initiation factor 3 (eIF-3) complex.

Its subcellular location is the cytoplasm. Component of the eukaryotic translation initiation factor 3 (eIF-3) complex, which is involved in protein synthesis of a specialized repertoire of mRNAs and, together with other initiation factors, stimulates binding of mRNA and methionyl-tRNAi to the 40S ribosome. The eIF-3 complex specifically targets and initiates translation of a subset of mRNAs involved in cell proliferation. This is Eukaryotic translation initiation factor 3 subunit I (tif34) from Emericella nidulans (strain FGSC A4 / ATCC 38163 / CBS 112.46 / NRRL 194 / M139) (Aspergillus nidulans).